Consider the following 444-residue polypeptide: Pestheic acid cluster transcriptional regulator 2 (444 aa).

A compositionally biased stretch (polar residues) spans 1 to 22 (MEAADPNNNLTITSPSTLLSNP). Residues 1 to 31 (MEAADPNNNLTITSPSTLLSNPTQPPAQPLK) form a disordered region. The segment at residues 36 to 63 (CHACASSKVKCHKEKPTCSRCRKRGITC) is a DNA-binding region (zn(2)-C6 fungal-type). Residues 326–348 (ARVGSGVSTHTTAGQYEPQVEQQ) form a disordered region. The segment covering 331–348 (GVSTHTTAGQYEPQVEQQ) has biased composition (polar residues).

The protein resides in the nucleus. Its function is as follows. Transcription factor that, with ptaR1 and ptaR3, coregulates the expression of the gene cluster that mediates the biosynthesis of pestheic acid, a diphenyl ether which is a biosynthetic precursor of the unique chloropupukeananes. This Pestalotiopsis fici (strain W106-1 / CGMCC3.15140) protein is Pestheic acid cluster transcriptional regulator 2.